The following is a 300-amino-acid chain: 4-diphosphocytidyl-2-C-methyl-D-erythritol kinase (300 aa).

Lys17 is an active-site residue. 102 to 112 serves as a coordination point for ATP; it reads PVAAGIGGGSA. Asp144 is an active-site residue.

Belongs to the GHMP kinase family. IspE subfamily.

The catalysed reaction is 4-CDP-2-C-methyl-D-erythritol + ATP = 4-CDP-2-C-methyl-D-erythritol 2-phosphate + ADP + H(+). It participates in isoprenoid biosynthesis; isopentenyl diphosphate biosynthesis via DXP pathway; isopentenyl diphosphate from 1-deoxy-D-xylulose 5-phosphate: step 3/6. Catalyzes the phosphorylation of the position 2 hydroxy group of 4-diphosphocytidyl-2C-methyl-D-erythritol. This Bradyrhizobium sp. (strain ORS 278) protein is 4-diphosphocytidyl-2-C-methyl-D-erythritol kinase.